Consider the following 315-residue polypeptide: 4-diphosphocytidyl-2-C-methyl-D-erythritol kinase (315 aa).

Lysine 11 is a catalytic residue. ATP is bound at residue proline 99–alanine 109. Residue aspartate 141 is part of the active site.

The protein belongs to the GHMP kinase family. IspE subfamily.

It carries out the reaction 4-CDP-2-C-methyl-D-erythritol + ATP = 4-CDP-2-C-methyl-D-erythritol 2-phosphate + ADP + H(+). It participates in isoprenoid biosynthesis; isopentenyl diphosphate biosynthesis via DXP pathway; isopentenyl diphosphate from 1-deoxy-D-xylulose 5-phosphate: step 3/6. In terms of biological role, catalyzes the phosphorylation of the position 2 hydroxy group of 4-diphosphocytidyl-2C-methyl-D-erythritol. The sequence is that of 4-diphosphocytidyl-2-C-methyl-D-erythritol kinase from Synechocystis sp. (strain ATCC 27184 / PCC 6803 / Kazusa).